The primary structure comprises 113 residues: Retrotransposon Gag-like protein 8C (113 aa).

It belongs to the FAM127 family.

This is Retrotransposon Gag-like protein 8C from Homo sapiens (Human).